We begin with the raw amino-acid sequence, 157 residues long: MGELRLVGGVLRVLVVVGAVFDVAVLNAGAASADGPVQLKSRLGDVCLDAPSGSWFSPLVINPCNGTDFQRWNLTDDRQVESVAFPGECVNIGNALWARLQPCVNWISQHWTVQPDGLVKSDLDACLTVLGGPDPGTWVSTRWCDPNAPDQQWDSVP.

A helical membrane pass occupies residues 6–26; the sequence is LVGGVLRVLVVVGAVFDVAVL. The Ricin B-type lectin domain maps to 33–157; sequence ADGPVQLKSR…APDQQWDSVP (125 aa).

Its subcellular location is the membrane. This is an uncharacterized protein from Mycobacterium tuberculosis (strain CDC 1551 / Oshkosh).